The chain runs to 85 residues: uncharacterized protein (85 aa).

A disordered region spans residues 1-85 (MRWRPSSWSA…DQEQCGQHCR (85 aa)). Residues 47–61 (ASVEGEGGRHADRHG) are compositionally biased toward basic and acidic residues.

This is an uncharacterized protein from Streptomyces lividans.